Here is a 160-residue protein sequence, read N- to C-terminus: Transcriptional repressor NrdR (160 aa).

A zinc finger spans residues 3 to 34; that stretch reads CPYCQYEDTQVKDSRPVEEGAVIRRRRVCPVC. Positions 49–139 constitute an ATP-cone domain; sequence LLVSKKSGRC…VYRDFRNASD (91 aa).

Belongs to the NrdR family. Zn(2+) is required as a cofactor.

Functionally, negatively regulates transcription of bacterial ribonucleotide reductase nrd genes and operons by binding to NrdR-boxes. The chain is Transcriptional repressor NrdR from Bartonella quintana (strain Toulouse) (Rochalimaea quintana).